The primary structure comprises 500 residues: Prostacyclin synthase (500 aa).

A helical membrane pass occupies residues 1–20 (MSWAVVFGLLAALLLLLLLT). Substrate is bound by residues arginine 106, leucine 112, asparagine 287, 358–359 (TR), and arginine 382. Cysteine 441 provides a ligand contact to heme.

It belongs to the cytochrome P450 family. It depends on heme as a cofactor.

It is found in the endoplasmic reticulum membrane. The enzyme catalyses prostaglandin H2 = prostaglandin I2. It carries out the reaction a hydroperoxyeicosatetraenoate = an oxoeicosatetraenoate + H2O. It catalyses the reaction (15S)-hydroperoxy-(5Z,8Z,11Z,13E)-eicosatetraenoate = 15-oxo-(5Z,8Z,11Z,13E)-eicosatetraenoate + H2O. The catalysed reaction is (15S)-hydroperoxy-(5Z,8Z,11Z,13E)-eicosatetraenoate + AH2 = (15S)-hydroxy-(5Z,8Z,11Z,13E)-eicosatetraenoate + A + H2O. Catalyzes the biosynthesis and metabolism of eicosanoids. Catalyzes the isomerization of prostaglandin H2 to prostacyclin (= prostaglandin I2), a potent mediator of vasodilation and inhibitor of platelet aggregation. Additionally, displays dehydratase activity, toward hydroperoxyeicosatetraenoates (HPETEs), especially toward (15S)-hydroperoxy-(5Z,8Z,11Z,13E)-eicosatetraenoate (15(S)-HPETE). In Bos taurus (Bovine), this protein is Prostacyclin synthase (PTGIS).